Here is a 95-residue protein sequence, read N- to C-terminus: Protein TusB (95 aa).

The protein belongs to the DsrH/TusB family. Heterohexamer, formed by a dimer of trimers. The hexameric TusBCD complex contains 2 copies each of TusB, TusC and TusD. The TusBCD complex interacts with TusE.

The protein localises to the cytoplasm. Its function is as follows. Part of a sulfur-relay system required for 2-thiolation of 5-methylaminomethyl-2-thiouridine (mnm(5)s(2)U) at tRNA wobble positions. The chain is Protein TusB from Klebsiella pneumoniae (strain 342).